The sequence spans 250 residues: Small ribosomal subunit protein uS2 (250 aa).

This sequence belongs to the universal ribosomal protein uS2 family.

The chain is Small ribosomal subunit protein uS2 from Chloroherpeton thalassium (strain ATCC 35110 / GB-78).